Here is a 586-residue protein sequence, read N- to C-terminus: Phosphomethylpyrimidine synthase (586 aa).

Residues 1 to 58 form a disordered region; sequence MKQSVSAEQIELKSSLPGSKKVYVDGPREGMKVPMREIEQSDTNGVPNPPIRVYDTSG. Residues 22 to 39 are compositionally biased toward basic and acidic residues; sequence VYVDGPREGMKVPMREIE. Substrate is bound by residues Asn193, Met222, Tyr251, His287, 307–309, 348–351, and Glu387; these read SRG and DGLR. Zn(2+) is bound at residue His391. Position 414 (Tyr414) interacts with substrate. His455 provides a ligand contact to Zn(2+). [4Fe-4S] cluster is bound by residues Cys535, Cys538, and Cys543.

This sequence belongs to the ThiC family. Requires [4Fe-4S] cluster as cofactor.

It carries out the reaction 5-amino-1-(5-phospho-beta-D-ribosyl)imidazole + S-adenosyl-L-methionine = 4-amino-2-methyl-5-(phosphooxymethyl)pyrimidine + CO + 5'-deoxyadenosine + formate + L-methionine + 3 H(+). It functions in the pathway cofactor biosynthesis; thiamine diphosphate biosynthesis. Functionally, catalyzes the synthesis of the hydroxymethylpyrimidine phosphate (HMP-P) moiety of thiamine from aminoimidazole ribotide (AIR) in a radical S-adenosyl-L-methionine (SAM)-dependent reaction. The chain is Phosphomethylpyrimidine synthase from Bacillus anthracis (strain A0248).